Here is a 1290-residue protein sequence, read N- to C-terminus: 1-phosphatidylinositol 4,5-bisphosphate phosphodiesterase gamma-1 (1290 aa).

N-acetylalanine is present on A2. A PH 1 domain is found at 27 to 142; sequence RSLEVGTVMT…WIKGLTWLME (116 aa). An EF-hand domain is found at 152–187; the sequence is QIERWLRKQFYSVDRNREDRISAKDLKNMLSQVNYR. Residues D165, N167, E169, R171, and D176 each coordinate Ca(2+). Positions 320-464 constitute a PI-PLC X-box domain; that stretch reads DTMNNPLSHY…LKRKILIKHK (145 aa). Active-site residues include H335 and H380. The PH 2; first part domain maps to 489–523; the sequence is SIKNGILYLEDPVNHEWYPHYFVLTSSKIYYSEET. Y506 bears the Phosphotyrosine mark. The interval 522-544 is disordered; sequence ETSSDQGNEDEEEPKEVSSSTEL. SH2 domains follow at residues 550 to 657 and 668 to 756; these read WFHG…SEPV and WYHA…RYPI. Position 771 is a phosphotyrosine; by SYK (Y771). Y775 carries the phosphotyrosine modification. Phosphotyrosine; by ITK, SYK and TXK is present on Y783. The 61-residue stretch at 791–851 folds into the SH3 domain; that stretch reads TFKCAVKALF…PSNYVEEMVN (61 aa). One can recognise a PH 2; second part domain in the interval 895–931; that stretch reads FVFSISMASVAHWSLDVAADSQEELQDWVKKIREVAQ. Positions 953-1070 constitute a PI-PLC Y-box domain; that stretch reads LSELVVYCRP…GYVLQPSTMR (118 aa). The residue at position 977 (Y977) is a Phosphotyrosine. A C2 domain is found at 1071–1194; that stretch reads DEAFDPFDKS…TGYRAVPLKN (124 aa). 5 positions are modified to phosphoserine: S1221, P1222, S1227, S1233, and S1248. Y1253 is subject to Phosphotyrosine. S1263 is modified (phosphoserine). The segment at 1271–1290 is disordered; that stretch reads FDSRERRAPRRTRVNGDNRL.

In terms of assembly, interacts with AGAP2 via its SH3 domain. Interacts (via SH2 domain) with RET. Interacts with FLT1 (tyrosine-phosphorylated). Interacts (via SH2 domain) with FGFR1, FGFR2, FGFR3 and FGFR4 (phosphorylated). Interacts with LAT (phosphorylated) upon TCR activation. Interacts (via SH3 domain) with the Pro-rich domain of TNK1. Associates with BLNK, VAV1, GRB2 and NCK1 in a B-cell antigen receptor-dependent fashion. Interacts with CBLB in activated T-cells; which inhibits phosphorylation. Interacts with SHB. Interacts (via SH3 domain) with the Arg/Gly-rich-flanked Pro-rich domains of KHDRBS1/SAM68. This interaction is selectively regulated by arginine methylation of KHDRBS1/SAM68. Interacts with INPP5D/SHIP1, THEMIS and CLNK. Interacts with AXL, FLT4 and KIT. Interacts with RALGPS1. Interacts (via the SH2 domains) with VIL1 (phosphorylated at C-terminus tyrosine phosphorylation sites). Interacts (via SH2 domain) with PDGFRA and PDGFRB (tyrosine phosphorylated). Interacts with PIP5K1C. Interacts with NTRK1 and NTRK2 (phosphorylated upon ligand-binding). Interacts with SYK; activates PLCG1. Interacts with GRB2, LAT and THEMIS upon TCR activation in thymocytes. Interacts with TESPA1; the association is increased with prolonged stimulation of the TCR and may facilitate the assembly of the LAT signalosome. Interacts (via C-terminal proline-rich domain (PRD)) with PLCG1 (via SH3 domain); this interaction leads to guanine nucleotide exchange from PlCG1 to DNM1 and enhances DNM1-dependent endocytosis. (Microbial infection) Interacts (via SH3 domain) with HEV ORF3 protein. Ca(2+) serves as cofactor. In terms of processing, tyrosine phosphorylated in response to signaling via activated FLT3, KIT and PDGFRA. Tyrosine phosphorylated by activated FGFR1, FGFR2, FGFR3 and FGFR4. Tyrosine phosphorylated by activated FLT1 and KDR. Tyrosine phosphorylated by activated PDGFRB. The receptor-mediated activation of PLCG1 involves its phosphorylation by tyrosine kinases, in response to ligation of a variety of growth factor receptors and immune system receptors. For instance, SYK phosphorylates and activates PLCG1 in response to ligation of the B-cell receptor. May be dephosphorylated by PTPRJ. Phosphorylated by ITK and TXK on Tyr-783 upon TCR activation in T-cells. Post-translationally, ubiquitinated by CBLB in activated T-cells.

It localises to the cell projection. The protein resides in the lamellipodium. It is found in the ruffle. The enzyme catalyses a 1,2-diacyl-sn-glycero-3-phospho-(1D-myo-inositol-4,5-bisphosphate) + H2O = 1D-myo-inositol 1,4,5-trisphosphate + a 1,2-diacyl-sn-glycerol + H(+). The catalysed reaction is a 1,2-diacyl-sn-glycero-3-phospho-(1D-myo-inositol) + H2O = 1D-myo-inositol 1-phosphate + a 1,2-diacyl-sn-glycerol + H(+). Activated by phosphorylation on tyrosine residues. Functionally, mediates the production of the second messenger molecules diacylglycerol (DAG) and inositol 1,4,5-trisphosphate (IP3). Plays an important role in the regulation of intracellular signaling cascades. Becomes activated in response to ligand-mediated activation of receptor-type tyrosine kinases, such as PDGFRA, PDGFRB, EGFR, FGFR1, FGFR2, FGFR3 and FGFR4. Plays a role in actin reorganization and cell migration. Guanine nucleotide exchange factor that binds the GTPase DNM1 and catalyzes the dissociation of GDP, allowing a GTP molecule to bind in its place, therefore enhancing DNM1-dependent endocytosis. The protein is 1-phosphatidylinositol 4,5-bisphosphate phosphodiesterase gamma-1 of Homo sapiens (Human).